The sequence spans 301 residues: Glycine--tRNA ligase alpha subunit (301 aa).

Belongs to the class-II aminoacyl-tRNA synthetase family. In terms of assembly, tetramer of two alpha and two beta subunits.

The protein localises to the cytoplasm. The enzyme catalyses tRNA(Gly) + glycine + ATP = glycyl-tRNA(Gly) + AMP + diphosphate. The chain is Glycine--tRNA ligase alpha subunit from Proteus mirabilis (strain HI4320).